Reading from the N-terminus, the 157-residue chain is MTITVDIEIEDEAWTTAEADAEALVWRAAQAVLDAHEDIEGQGIVILLTDDDSVQALNRDFRKKDYATNVLSFPSPPNPEGQIGDIALAYGVCAREAAEQGKPLAHHLQHLVAHGVLHLLGYDHERDDEAEAMEALEREILAGLDVPDPYASDEEGR.

Residues His-114, His-118, and His-124 each coordinate Zn(2+).

This sequence belongs to the endoribonuclease YbeY family. It depends on Zn(2+) as a cofactor.

The protein resides in the cytoplasm. In terms of biological role, single strand-specific metallo-endoribonuclease involved in late-stage 70S ribosome quality control and in maturation of the 3' terminus of the 16S rRNA. The sequence is that of Endoribonuclease YbeY from Caulobacter vibrioides (strain ATCC 19089 / CIP 103742 / CB 15) (Caulobacter crescentus).